The sequence spans 330 residues: Aspartate--ammonia ligase (330 aa).

This sequence belongs to the class-II aminoacyl-tRNA synthetase family. AsnA subfamily.

It localises to the cytoplasm. The catalysed reaction is L-aspartate + NH4(+) + ATP = L-asparagine + AMP + diphosphate + H(+). It participates in amino-acid biosynthesis; L-asparagine biosynthesis; L-asparagine from L-aspartate (ammonia route): step 1/1. The protein is Aspartate--ammonia ligase of Haemophilus influenzae (strain ATCC 51907 / DSM 11121 / KW20 / Rd).